A 206-amino-acid chain; its full sequence is Small ribosomal subunit protein uS4 (206 aa).

An S4 RNA-binding domain is found at 96–156 (TRLDNVVYRM…EKSKTQARII (61 aa)).

The protein belongs to the universal ribosomal protein uS4 family. Part of the 30S ribosomal subunit. Contacts protein S5. The interaction surface between S4 and S5 is involved in control of translational fidelity.

Its function is as follows. One of the primary rRNA binding proteins, it binds directly to 16S rRNA where it nucleates assembly of the body of the 30S subunit. With S5 and S12 plays an important role in translational accuracy. In Colwellia psychrerythraea (strain 34H / ATCC BAA-681) (Vibrio psychroerythus), this protein is Small ribosomal subunit protein uS4.